The chain runs to 260 residues: Segregation and condensation protein A (260 aa).

Belongs to the ScpA family. As to quaternary structure, component of a cohesin-like complex composed of ScpA, ScpB and the Smc homodimer, in which ScpA and ScpB bind to the head domain of Smc. The presence of the three proteins is required for the association of the complex with DNA.

It localises to the cytoplasm. In terms of biological role, participates in chromosomal partition during cell division. May act via the formation of a condensin-like complex containing Smc and ScpB that pull DNA away from mid-cell into both cell halves. The protein is Segregation and condensation protein A of Halalkalibacterium halodurans (strain ATCC BAA-125 / DSM 18197 / FERM 7344 / JCM 9153 / C-125) (Bacillus halodurans).